Reading from the N-terminus, the 252-residue chain is Chitooligosaccharide deacetylase (252 aa).

Mg(2+) is bound by residues His-61 and His-125.

This sequence belongs to the YdjC deacetylase family. ChbG subfamily. As to quaternary structure, homodimer. Mg(2+) is required as a cofactor.

The protein resides in the cytoplasm. It catalyses the reaction N,N'-diacetylchitobiose + H2O = N-acetyl-beta-D-glucosaminyl-(1-&gt;4)-D-glucosamine + acetate. The catalysed reaction is diacetylchitobiose-6'-phosphate + H2O = N'-monoacetylchitobiose-6'-phosphate + acetate. It participates in glycan degradation; chitin degradation. Functionally, involved in the degradation of chitin. ChbG is essential for growth on the acetylated chitooligosaccharides chitobiose and chitotriose but is dispensable for growth on cellobiose and chitosan dimer, the deacetylated form of chitobiose. Deacetylation of chitobiose-6-P and chitotriose-6-P is necessary for both the activation of the chb promoter by the regulatory protein ChbR and the hydrolysis of phosphorylated beta-glucosides by the phospho-beta-glucosidase ChbF. Catalyzes the removal of only one acetyl group from chitobiose-6-P to yield monoacetylchitobiose-6-P, the inducer of ChbR and the substrate of ChbF. The protein is Chitooligosaccharide deacetylase of Salmonella newport (strain SL254).